Here is a 281-residue protein sequence, read N- to C-terminus: ADSGSAVVALTNDRDTSYYGEIGIGTPPQKFTVIFDTGSSVLWVPSSKAHSMYESSGSSTYKSQDSVTIGDLVVKEQDFIEATEEADNVFLNRLFDGILGLSFQTISVPVWYNMLNQGLVKRFSFWLNRNVDEEEGGELVFGGLDPNHFRGDHTYVPVTYQYYWQFGIGDVLIGDKSTGFCAPGCQAFADSGTSLLSGPTAIVTQINHAIGANGSEELNVKFGLTPEQYILKGEATQCISGFTAMDATLLGPLWILGDVFMRPYHTVFDYGNLLVGFAEAA.

Residues 18-278 form the Peptidase A1 domain; it reads YYGEIGIGTP…DYGNLLVGFA (261 aa). Asp36 is a catalytic residue. Cys181 and Cys185 are oxidised to a cystine. The active site involves Asp190. An N-linked (GlcNAc...) asparagine glycan is attached at Asn213.

This sequence belongs to the peptidase A1 family. Heterodimer of a light chain and a heavy chain. An intermediate form is produced first, and undergoes proteolytic processing to remove the internal plant-specific insert (PSI) and the propeptide. In terms of processing, N-glycosylated. In terms of tissue distribution, pistils.

It localises to the microsome membrane. The protein resides in the protein storage vacuole. The protein localises to the secreted. It is found in the cell wall. Its subcellular location is the extracellular space. It localises to the extracellular matrix. With respect to regulation, inhibited by pepstatin. Aspartic protease with a high preference for bonds between hydrophobic residues. The polypeptide is Cardosin-F (Cynara cardunculus (Cardoon)).